Consider the following 516-residue polypeptide: Na(+)/H(+) antiporter NhaB (516 aa).

12 helical membrane passes run 23-43, 61-80, 97-117, 120-140, 144-164, 202-222, 238-258, 303-323, 348-368, 391-411, 447-467, and 475-495; these read LALI…PFVA, CYPL…IGMT, LLLM…LFVF, LLLG…AAAF, FLDA…FYGI, LMMH…VGEP, FFLR…LTCL, ALIG…VGLI, TEAL…AVII, LFYL…VGTV, ATPN…APLI, and VWMA…CVEF.

This sequence belongs to the NhaB Na(+)/H(+) (TC 2.A.34) antiporter family.

Its subcellular location is the cell inner membrane. The catalysed reaction is 2 Na(+)(in) + 3 H(+)(out) = 2 Na(+)(out) + 3 H(+)(in). Functionally, na(+)/H(+) antiporter that extrudes sodium in exchange for external protons. The chain is Na(+)/H(+) antiporter NhaB from Klebsiella pneumoniae subsp. pneumoniae (strain ATCC 700721 / MGH 78578).